Reading from the N-terminus, the 438-residue chain is Adenylosuccinate synthetase (438 aa).

GTP contacts are provided by residues 13-19 (GDEGKGK) and 41-43 (GHT). Residue Asp14 is the Proton acceptor of the active site. Mg(2+) is bound by residues Asp14 and Gly41. IMP contacts are provided by residues 14–17 (DEGK), 39–42 (NAGH), Thr130, Arg144, Gln225, Thr240, and Arg312. His42 (proton donor) is an active-site residue. Residue 308-314 (ATTGRQR) coordinates substrate. Residues Arg314, 340–342 (KLD), and 422–424 (STG) each bind GTP.

It belongs to the adenylosuccinate synthetase family. Homodimer. It depends on Mg(2+) as a cofactor.

Its subcellular location is the cytoplasm. It catalyses the reaction IMP + L-aspartate + GTP = N(6)-(1,2-dicarboxyethyl)-AMP + GDP + phosphate + 2 H(+). Its pathway is purine metabolism; AMP biosynthesis via de novo pathway; AMP from IMP: step 1/2. Plays an important role in the de novo pathway of purine nucleotide biosynthesis. Catalyzes the first committed step in the biosynthesis of AMP from IMP. The chain is Adenylosuccinate synthetase from Vesicomyosocius okutanii subsp. Calyptogena okutanii (strain HA).